Reading from the N-terminus, the 1500-residue chain is Alpha-1-macroglobulin (1500 aa).

Residues 1–24 form the signal peptide; it reads MRRNQLPIPVFLLLLLLLPRDATA. Residues Cys-48 and Cys-86 are joined by a disulfide bond. Asn-55, Asn-61, and Asn-157 each carry an N-linked (GlcNAc...) asparagine glycan. Cystine bridges form between Cys-249–Cys-298 and Cys-267–Cys-286. 2 N-linked (GlcNAc...) asparagine glycosylation sites follow: Asn-382 and Asn-412. Cys-469 and Cys-562 form a disulfide bridge. Residue Asn-568 is glycosylated (N-linked (GlcNAc...) asparagine). 6 disulfide bridges follow: Cys-594–Cys-785, Cys-642–Cys-689, Cys-835–Cys-863, Cys-861–Cys-897, Cys-935–Cys-1344, and Cys-1094–Cys-1142. Residues 686–746 are bait region; that stretch reads PRYCPMYQAY…QEVEVRETVR (61 aa). N-linked (GlcNAc...) asparagine glycosylation is found at Asn-883 and Asn-944. Positions 986–989 form a cross-link, isoglutamyl cysteine thioester (Cys-Gln); the sequence is CGEQ. Residue Asn-1005 is glycosylated (N-linked (GlcNAc...) asparagine). Residues 1360 to 1500 are receptor-binding domain; the sequence is EGEAPFTLKV…FSSDSEQGNA (141 aa). N-linked (GlcNAc...) asparagine glycans are attached at residues Asn-1390 and Asn-1448.

It belongs to the protease inhibitor I39 (alpha-2-macroglobulin) family. In terms of assembly, homotetramer; disulfide-linked. In terms of tissue distribution, widely expressed. Highest level in ovary, testis, uterus and prostate. Protein found in plasma.

The protein resides in the secreted. Its function is as follows. Is able to inhibit all four classes of proteinases by a unique 'trapping' mechanism. This protein has a peptide stretch, called the 'bait region' which contains specific cleavage sites for different proteinases. When a proteinase cleaves the bait region, a conformational change is induced in the protein which traps the proteinase. The entrapped enzyme remains active against low molecular weight substrates (activity against high molecular weight substrates is greatly reduced). Following cleavage in the bait region a thioester bond is hydrolyzed and mediates the covalent binding of the protein to the proteinase. The protein is Alpha-1-macroglobulin of Rattus norvegicus (Rat).